An 84-amino-acid chain; its full sequence is RNA-binding protein Hfq (84 aa).

One can recognise a Sm domain in the interval 10–70; that stretch reads DLFLNVLRRD…ISTIMPFRPV (61 aa).

The protein belongs to the Hfq family. In terms of assembly, homohexamer.

Its function is as follows. RNA chaperone that binds small regulatory RNA (sRNAs) and mRNAs to facilitate mRNA translational regulation in response to envelope stress, environmental stress and changes in metabolite concentrations. Also binds with high specificity to tRNAs. The protein is RNA-binding protein Hfq of Moorella thermoacetica (strain ATCC 39073 / JCM 9320).